Consider the following 225-residue polypeptide: Large ribosomal subunit protein bL25 (225 aa).

Residues P197–E225 are disordered. Positions Q202–E225 are enriched in acidic residues.

It belongs to the bacterial ribosomal protein bL25 family. CTC subfamily. Part of the 50S ribosomal subunit; part of the 5S rRNA/L5/L18/L25 subcomplex. Contacts the 5S rRNA. Binds to the 5S rRNA independently of L5 and L18.

In terms of biological role, this is one of the proteins that binds to the 5S RNA in the ribosome where it forms part of the central protuberance. The chain is Large ribosomal subunit protein bL25 from Dichelobacter nodosus (strain VCS1703A).